Reading from the N-terminus, the 331-residue chain is D-alanine--D-alanine ligase (331 aa).

Residues 116–316 (KRQWQTHGLP…YEDFVLQLAA (201 aa)) form the ATP-grasp domain. 142-197 (ADRLGLPLIVKPAREGSSIGLTKVTSVAELPAAYEKAARLDRDVMAEQFIEGDELT) provides a ligand contact to ATP. 3 residues coordinate Mg(2+): D269, E283, and N285.

The protein belongs to the D-alanine--D-alanine ligase family. Requires Mg(2+) as cofactor. Mn(2+) serves as cofactor.

It is found in the cytoplasm. It catalyses the reaction 2 D-alanine + ATP = D-alanyl-D-alanine + ADP + phosphate + H(+). Its pathway is cell wall biogenesis; peptidoglycan biosynthesis. Functionally, cell wall formation. The sequence is that of D-alanine--D-alanine ligase from Ralstonia pickettii (strain 12J).